We begin with the raw amino-acid sequence, 409 residues long: Rho-GTPase-activating protein BAG7 (409 aa).

A compositionally biased stretch (polar residues) spans 1–26; that stretch reads MFNMNLLSTPSSEEGSPQNRSSSMSS. Positions 1 to 32 are disordered; sequence MFNMNLLSTPSSEEGSPQNRSSSMSSVEGKKD. The region spanning 50-257 is the Rho-GAP domain; sequence VSLEESLKVA…FLILHASDII (208 aa). The tract at residues 362 to 409 is disordered; that stretch reads KLLGNVGNSSNTGIKDPTERVPRGEHKTKHKQRQSWLRRLTSPSRTQP. Positions 377–386 are enriched in basic and acidic residues; it reads DPTERVPRGE.

In terms of assembly, interacts with RHO1.

Functionally, acts in signal transduction. Activates RHO1. This chain is Rho-GTPase-activating protein BAG7 (BAG7), found in Saccharomyces cerevisiae (strain ATCC 204508 / S288c) (Baker's yeast).